Reading from the N-terminus, the 171-residue chain is S-ribosylhomocysteine lyase (171 aa).

Residues His54, His58, and Cys128 each coordinate Fe cation.

The protein belongs to the LuxS family. Homodimer. Fe cation is required as a cofactor.

It catalyses the reaction S-(5-deoxy-D-ribos-5-yl)-L-homocysteine = (S)-4,5-dihydroxypentane-2,3-dione + L-homocysteine. Involved in the synthesis of autoinducer 2 (AI-2) which is secreted by bacteria and is used to communicate both the cell density and the metabolic potential of the environment. The regulation of gene expression in response to changes in cell density is called quorum sensing. Catalyzes the transformation of S-ribosylhomocysteine (RHC) to homocysteine (HC) and 4,5-dihydroxy-2,3-pentadione (DPD). This chain is S-ribosylhomocysteine lyase, found in Campylobacter curvus (strain 525.92).